A 197-amino-acid chain; its full sequence is Putative early 21.8 kDa protein (197 aa).

This protein is required for viral late gene expression. The sequence is that of Putative early 21.8 kDa protein (DA26) from Orgyia pseudotsugata (Douglas-fir tussock moth).